The sequence spans 1021 residues: SWI/SNF-related matrix-associated actin-dependent regulator of chromatin subfamily A containing DEAD/H box 1 (1021 aa).

Met-1 carries the post-translational modification N-acetylmethionine. 2 disordered regions span residues 1–82 (MNLF…SLSC) and 124–151 (SEPS…EDLS). Residues 7-19 (DRFRFEKRSKIEE) are compositionally biased toward basic and acidic residues. Positions 22 to 39 (EAAPQPSQARPSSPISLS) are enriched in low complexity. Thr-54 bears the Phosphothreonine mark. A Phosphoserine modification is found at Ser-57. Residue Lys-77 forms a Glycyl lysine isopeptide (Lys-Gly) (interchain with G-Cter in SUMO2) linkage. A phosphoserine mark is found at Ser-79, Ser-124, Ser-127, Ser-132, Ser-144, Ser-145, and Ser-151. A CUE 1 domain is found at 156 to 198 (LKDAKLQTLKELFPQRSDSDLLKLIESTSTMDGAIAAALLMFG). The interval 201–246 (GGGPRKRKLSSSSEEDDVNDDQSVKQPRGDRGEESNESAEASSNWE) is disordered. Phosphoserine occurs at positions 210, 213, 235, and 238. Residues 247-290 (KQESIVLKLQKEFPNFDKQELREVLKEHEWMYTEALESLKVFAE) enclose the CUE 2 domain. At Ser-298 the chain carries Phosphoserine. The tract at residues 329-366 (VKPQNGFNKKRKKNVFNPKKAVEDSEYDSGSDAGSSLD) is disordered. Residues Lys-330 and Lys-466 each participate in a glycyl lysine isopeptide (Lys-Gly) (interchain with G-Cter in SUMO2) cross-link. One can recognise a Helicase ATP-binding domain in the interval 504-672 (ALVHKHGLNG…MSLLNFVMPH (169 aa)). 516 to 524 (ADEMGLGKT) lines the ATP pocket. The DEGH box motif lies at 623-626 (DEGH). The Nuclear localization signal signature appears at 716 to 733 (RRVKEEVLKLLPPKKDRI). Residue Lys-719 forms a Glycyl lysine isopeptide (Lys-Gly) (interchain with G-Cter in SUMO2) linkage. The region spanning 853–1005 (ALGCILSELK…MTTVDEADEG (153 aa)) is the Helicase C-terminal domain. An ATP-binding site is contributed by 892 to 899 (YLRLDGKT). A Glycyl lysine isopeptide (Lys-Gly) (interchain with G-Cter in SUMO2) cross-link involves residue Lys-991. A DEAD box motif is present at residues 1000–1003 (DEAD).

The protein belongs to the SNF2/RAD54 helicase family. In terms of assembly, binds to DNA preferentially in the vicinity of transcriptional start sites. Interacts with MSH2 and TRIM28. Part of a complex composed of TRIM28, HDAC1, HDAC2 and EHMT2. Interacts with PCNA.

It localises to the nucleus. The protein resides in the chromosome. The enzyme catalyses ATP + H2O = ADP + phosphate + H(+). Functionally, DNA helicase that possesses intrinsic ATP-dependent nucleosome-remodeling activity and is both required for DNA repair and heterochromatin organization. Promotes DNA end resection of double-strand breaks (DSBs) following DNA damage: probably acts by weakening histone DNA interactions in nucleosomes flanking DSBs. Required for the restoration of heterochromatin organization after replication. Acts at replication sites to facilitate the maintenance of heterochromatin by directing H3 and H4 histones deacetylation, H3 'Lys-9' trimethylation (H3K9me3) and restoration of silencing. The chain is SWI/SNF-related matrix-associated actin-dependent regulator of chromatin subfamily A containing DEAD/H box 1 (Smarcad1) from Mus musculus (Mouse).